The sequence spans 598 residues: Aspartate--tRNA(Asp/Asn) ligase (598 aa).

Glu174 serves as a coordination point for L-aspartate. An aspartate region spans residues Gln198–Lys201. Arg220 is an L-aspartate binding site. ATP contacts are provided by residues Arg220–Glu222 and Gln229. His458 is an L-aspartate binding site. Residue Glu492 participates in ATP binding. L-aspartate is bound at residue Arg499. Gly544–Arg547 is a binding site for ATP.

This sequence belongs to the class-II aminoacyl-tRNA synthetase family. Type 1 subfamily. As to quaternary structure, homodimer.

It is found in the cytoplasm. It catalyses the reaction tRNA(Asx) + L-aspartate + ATP = L-aspartyl-tRNA(Asx) + AMP + diphosphate. Its function is as follows. Aspartyl-tRNA synthetase with relaxed tRNA specificity since it is able to aspartylate not only its cognate tRNA(Asp) but also tRNA(Asn). Reaction proceeds in two steps: L-aspartate is first activated by ATP to form Asp-AMP and then transferred to the acceptor end of tRNA(Asp/Asn). This is Aspartate--tRNA(Asp/Asn) ligase from Dehalococcoides mccartyi (strain CBDB1).